The primary structure comprises 183 residues: ATP synthase subunit b, chloroplastic (183 aa).

Residues 33–51 (IINLSVVIGVVVSFGGDAL) traverse the membrane as a helical segment.

Belongs to the ATPase B chain family. As to quaternary structure, F-type ATPases have 2 components, F(1) - the catalytic core - and F(0) - the membrane proton channel. F(1) has five subunits: alpha(3), beta(3), gamma(1), delta(1), epsilon(1). F(0) has four main subunits: a(1), b(1), b'(1) and c(10-14). The alpha and beta chains form an alternating ring which encloses part of the gamma chain. F(1) is attached to F(0) by a central stalk formed by the gamma and epsilon chains, while a peripheral stalk is formed by the delta, b and b' chains.

It is found in the plastid. The protein resides in the chloroplast thylakoid membrane. Functionally, f(1)F(0) ATP synthase produces ATP from ADP in the presence of a proton or sodium gradient. F-type ATPases consist of two structural domains, F(1) containing the extramembraneous catalytic core and F(0) containing the membrane proton channel, linked together by a central stalk and a peripheral stalk. During catalysis, ATP synthesis in the catalytic domain of F(1) is coupled via a rotary mechanism of the central stalk subunits to proton translocation. In terms of biological role, component of the F(0) channel, it forms part of the peripheral stalk, linking F(1) to F(0). The chain is ATP synthase subunit b, chloroplastic from Oltmannsiellopsis viridis (Marine flagellate).